Here is a 490-residue protein sequence, read N- to C-terminus: Glucose-6-phosphate 1-dehydrogenase (490 aa).

NADP(+) contacts are provided by residues Arg49, 91-92 (DV), and Lys146. 4 residues coordinate substrate: His176, Lys180, Glu214, and Asp233. The active-site Proton acceptor is His238. Substrate contacts are provided by Lys338 and Lys343.

The protein belongs to the glucose-6-phosphate dehydrogenase family.

The enzyme catalyses D-glucose 6-phosphate + NADP(+) = 6-phospho-D-glucono-1,5-lactone + NADPH + H(+). It functions in the pathway carbohydrate degradation; pentose phosphate pathway; D-ribulose 5-phosphate from D-glucose 6-phosphate (oxidative stage): step 1/3. In terms of biological role, catalyzes the oxidation of glucose 6-phosphate to 6-phosphogluconolactone. The polypeptide is Glucose-6-phosphate 1-dehydrogenase (Buchnera aphidicola subsp. Schizaphis graminum (strain Sg)).